Reading from the N-terminus, the 65-residue chain is DNA-directed RNA polymerase subunit omega (65 aa).

The protein belongs to the RNA polymerase subunit omega family. In terms of assembly, the RNAP catalytic core consists of 2 alpha, 1 beta, 1 beta' and 1 omega subunit. When a sigma factor is associated with the core the holoenzyme is formed, which can initiate transcription.

The catalysed reaction is RNA(n) + a ribonucleoside 5'-triphosphate = RNA(n+1) + diphosphate. In terms of biological role, promotes RNA polymerase assembly. Latches the N- and C-terminal regions of the beta' subunit thereby facilitating its interaction with the beta and alpha subunits. The polypeptide is DNA-directed RNA polymerase subunit omega (Baumannia cicadellinicola subsp. Homalodisca coagulata).